We begin with the raw amino-acid sequence, 458 residues long: Ammonium transporter Rh type B (458 aa).

The Cytoplasmic segment spans residues 1 to 13 (MAGSPSRAAGRRL). Residues 14-34 (QLPLLCLFLQGATAVLFAVFV) traverse the membrane as a helical segment. Topologically, residues 35–61 (RYNHKTDAALWHRGNYSNADNEFYFRY) are extracellular. A glycan (N-linked (GlcNAc...) asparagine) is linked at N49. Residues 62–82 (PSFQDVHAMVFVGFGFLMVFL) traverse the membrane as a helical segment. The Cytoplasmic portion of the chain corresponds to 83-86 (QRYG). A helical membrane pass occupies residues 87 to 107 (FSSVGFTFLLAAFALQWSTLV). The Extracellular segment spans residues 108 to 124 (QGFLHSFHSGHIHVGVE). The helical transmembrane segment at 125–145 (SMINADFCAGAVLISFGAVLG) threads the bilayer. At 146–149 (KTGP) the chain is on the cytoplasmic side. A helical membrane pass occupies residues 150-170 (AQLLLMALLEVVLFGINEFVL). At 171–178 (LHLLGVRD) the chain is on the extracellular side. The helical transmembrane segment at 179-201 (AGGSMTIHTFGAYFGLVLSRVLY) threads the bilayer. At 202–219 (RPQLEKSKHRQGSVYHSD) the chain is on the cytoplasmic side. A helical transmembrane segment spans residues 220–240 (LFAMIGTIFLWIFWPSFNSAL). At 241 to 251 (TALGAGQHRTA) the chain is on the extracellular side. Residues 252 to 272 (LNTYYSLAASTLGTFALSALV) form a helical membrane-spanning segment. The Cytoplasmic portion of the chain corresponds to 273-282 (GEDGRLDMVH). Residues 283–303 (IQNAALAGGVVVGTSSEMMLT) traverse the membrane as a helical segment. P304 is a topological domain (extracellular). Residues 305–325 (FGALAAGFLAGTVSTLGYKFF) traverse the membrane as a helical segment. Residues 326 to 346 (TPILESKFKVQDTCGVHNLHG) lie on the Cytoplasmic side of the membrane. The helical transmembrane segment at 347–367 (MPGVLGALLGVLVAGLATHEA) threads the bilayer. Residues 368–393 (YGDGLESVFPLIAEGQRSATSQAMLQ) lie on the Extracellular side of the membrane. The chain crosses the membrane as a helical span at residues 394–414 (LFGLFVTLMFASVGGGLGGLL). At 415–458 (LKLPFLDSPPDSQCYEDQVHWQVPGEHEDEAQRPLRVEEADTQA) the chain is on the cytoplasmic side. The segment at 416–424 (KLPFLDSPP) is interaction with ANK3. The Basolateral sorting signal motif lies at 429-432 (YEDQ). The interval 439–458 (GEHEDEAQRPLRVEEADTQA) is disordered. The segment covering 444–458 (EAQRPLRVEEADTQA) has biased composition (basic and acidic residues).

The protein belongs to the ammonium transporter (TC 2.A.49) family. Rh subfamily. As to quaternary structure, interacts (via C-terminus) with ANK2 and ANK3; required for targeting to the basolateral membrane. In terms of processing, N-glycosylated.

The protein resides in the cell membrane. It localises to the basolateral cell membrane. The catalysed reaction is NH4(+)(in) = NH4(+)(out). It carries out the reaction methylamine(out) = methylamine(in). The enzyme catalyses CO2(out) = CO2(in). Functionally, ammonium transporter involved in the maintenance of acid-base homeostasis. Transports ammonium and its related derivative methylammonium across the basolateral plasma membrane of epithelial cells likely contributing to renal transepithelial ammonia transport and ammonia metabolism. May transport either NH4(+) or NH3 ammonia species predominantly mediating an electrogenic NH4(+) transport. May act as a CO2 channel providing for renal acid secretion. The polypeptide is Ammonium transporter Rh type B (RHBG) (Papio hamadryas (Hamadryas baboon)).